Reading from the N-terminus, the 472-residue chain is FAD-dependent monooxygenase ltmM (472 aa).

A helical membrane pass occupies residues 7 to 27 (VIIVGGSVAGLSLAHCLEKIG). FAD contacts are provided by Glu-34, Gly-48, and Arg-107. The N-linked (GlcNAc...) asparagine glycan is linked to Asn-186. Positions 306 and 319 each coordinate FAD. Residues 450-470 (IVYALYLVAAAAFILYCLSSL) form a helical membrane-spanning segment.

The protein belongs to the paxM FAD-dependent monooxygenase family. It depends on FAD as a cofactor.

The protein resides in the membrane. The protein operates within secondary metabolite biosynthesis. FAD-dependent monooxygenase; part of the gene cluster that mediates the biosynthesis of lolitrems, indole-diterpene mycotoxins that are potent tremorgens in mammals, and are synthesized by clavicipitaceous fungal endophytes in association with their grass hosts. The geranylgeranyl diphosphate (GGPP) synthase ltmG is proposed to catalyze the first step in lolitrem biosynthesis. LtmG catalyzes a series of iterative condensations of isopentenyl diphosphate (IPP) with dimethylallyl diphosphate (DMAPP), geranyl diphosphate (GPP), and farnesyl diphosphate (FPP), to form GGPP. GGPP then condenses with indole-3-glycerol phosphate to form 3-geranylgeranylindole, an acyclic intermediate, to be incorporated into paxilline. Either ltmG or ltmC could be responsible for this step, as both are putative prenyl transferases. The FAD-dependent monooxygenase ltmM then catalyzes the epoxidation of the two terminal alkenes of the geranylgeranyl moiety, which is subsequently cyclized by ltmC, to paspaline. The cytochrome P450 monooxygenases ltmQ and ltmP can sequentially oxidize paspaline to terpendole E and terpendole F. Alternatively, ltmP converts paspaline to an intermediate which is oxidized by ltmQ to terpendole F. LtmF, ltmK, ltmE and ltmJ appear to be unique to the epichloe endophytes. The prenyltransferase ltmF is involved in the 27-hydroxyl-O-prenylation. The cytochrome P450 monooxygenase ltmK is required for the oxidative acetal ring formation. The multi-functional prenyltransferase ltmE is required for C20- and C21-prenylations of the indole ring of paspalanes and acts together with the cytochrome P450 monooxygenase ltmJ to yield lolitremanes by multiple oxidations and ring closures. The stereoisomer pairs of lolitriol and lolitrem N or lolitrem B and lolitrem F may be attributed to variations in the way in which ring closure can occur under the action of ltmJ. While the major product of this pathway is lolitrem B, the prenyl transferases and cytochrome P450 monooxygenases identified in this pathway have a remarkable versatility in their regio- and stereo-specificities to generate a diverse range of metabolites that are products of a metabolic grid rather than a linear pathway. The polypeptide is FAD-dependent monooxygenase ltmM (ltmM) (Epichloe festucae (strain Fl1)).